The sequence spans 154 residues: MGLSDGEWQLVLNAWGKVEADVAGHGQEVLIRLFTGHPETLEKFDKFKHLKTEAEMKASEDLKKHGNTVLTALGGILKKKGHHEAEVKHLAESHANKHKIPVKYLEFISDAIIHVLHAKHPSDFGADAQGAMSKALELFRNDMAAQYKVLGFQG.

The region spanning 2 to 148 is the Globin domain; it reads GLSDGEWQLV…FRNDMAAQYK (147 aa). Ser4 carries the phosphoserine modification. His65 lines the nitrite pocket. His65 is an O2 binding site. A Phosphothreonine modification is found at Thr68. His94 is a binding site for heme b.

In terms of assembly, monomer.

It localises to the cytoplasm. It is found in the sarcoplasm. The catalysed reaction is Fe(III)-heme b-[protein] + nitric oxide + H2O = Fe(II)-heme b-[protein] + nitrite + 2 H(+). It carries out the reaction H2O2 + AH2 = A + 2 H2O. Functionally, monomeric heme protein which primary function is to store oxygen and facilitate its diffusion within muscle tissues. Reversibly binds oxygen through a pentacoordinated heme iron and enables its timely and efficient release as needed during periods of heightened demand. Depending on the oxidative conditions of tissues and cells, and in addition to its ability to bind oxygen, it also has a nitrite reductase activity whereby it regulates the production of bioactive nitric oxide. Under stress conditions, like hypoxia and anoxia, it also protects cells against reactive oxygen species thanks to its pseudoperoxidase activity. The sequence is that of Myoglobin from Rangifer tarandus (Reindeer).